The chain runs to 317 residues: 17-beta-hydroxysteroid dehydrogenase type 6 (317 aa).

Positions 1–17 are cleaved as a signal peptide; the sequence is MWLYLAAFVGLYYLLHW. An NAD(+)-binding site is contributed by 33–57; it reads FITGCDSGFGNLLARQLDARGLRVL. N-linked (GlcNAc...) asparagine glycosylation is present at asparagine 161. Serine 164 is a binding site for substrate. Tyrosine 176 (proton acceptor) is an active-site residue. N-linked (GlcNAc...) asparagine glycosylation is found at asparagine 215 and asparagine 256.

Belongs to the short-chain dehydrogenases/reductases (SDR) family. In terms of tissue distribution, detected in liver and prostate (at protein level). Detected in adult liver, lung, brain, placenta, prostate, adrenal gland, testis, mammary gland, spleen, spinal cord and uterus. Detected in caudate nucleus, and at lower levels in amygdala, corpus callosum, hippocampus, substantia nigra and thalamus. Detected in fetal lung, liver and brain.

Its subcellular location is the microsome membrane. The protein resides in the early endosome membrane. The catalysed reaction is all-trans-retinol--[retinol-binding protein] + NAD(+) = all-trans-retinal--[retinol-binding protein] + NADH + H(+). The enzyme catalyses all-trans-retinol + NAD(+) = all-trans-retinal + NADH + H(+). It carries out the reaction androsterone + NAD(+) = 5alpha-androstan-3,17-dione + NADH + H(+). It catalyses the reaction testosterone + NAD(+) = androst-4-ene-3,17-dione + NADH + H(+). The catalysed reaction is 5alpha-androstane-3alpha,17beta-diol + NAD(+) = 17beta-hydroxy-5alpha-androstan-3-one + NADH + H(+). The enzyme catalyses 17beta-estradiol + NAD(+) = estrone + NADH + H(+). It carries out the reaction 17beta-estradiol + NADP(+) = estrone + NADPH + H(+). It catalyses the reaction 3alpha-hydroxy-5alpha-pregnan-20-one + NAD(+) = 5alpha-pregnane-3,20-dione + NADH + H(+). The catalysed reaction is 5alpha-androstane-3beta,17beta-diol + NAD(+) = 17beta-hydroxy-5alpha-androstan-3-one + NADH + H(+). The enzyme catalyses 3beta-hydroxy-5alpha-androstan-17-one + NAD(+) = 5alpha-androstan-3,17-dione + NADH + H(+). Functionally, NAD-dependent oxidoreductase with broad substrate specificity that shows both oxidative and reductive activity (in vitro). Has 17-beta-hydroxysteroid dehydrogenase activity towards various steroids (in vitro). Converts 5-alpha-androstan-3-alpha,17-beta-diol to androsterone and estradiol to estrone (in vitro). Has 3-alpha-hydroxysteroid dehydrogenase activity towards androsterone (in vitro). Has retinol dehydrogenase activity towards all-trans-retinol (in vitro). Can convert androsterone to epi-androsterone. Androsterone is first oxidized to 5-alpha-androstane-3,17-dione and then reduced to epi-andosterone. Can act on both C-19 and C-21 3-alpha-hydroxysteroids. This chain is 17-beta-hydroxysteroid dehydrogenase type 6 (HSD17B6), found in Homo sapiens (Human).